Reading from the N-terminus, the 360-residue chain is Protein OSB4, chloroplastic (360 aa).

A chloroplast-targeting transit peptide spans 1 to 61 (MQFLGRSISK…AEKSSEEWPR (61 aa)). The disordered stretch occupies residues 28–64 (SQQFLSTSSTESSSRTRGGGGGNRAEKSSEEWPRPME). A compositionally biased stretch (low complexity) spans 33 to 43 (STSSTESSSRT). Over residues 51-61 (RAEKSSEEWPR) the composition is skewed to basic and acidic residues. In terms of domain architecture, SSB spans 71 to 188 (IANSIDLIGY…VMVRDLHYIE (118 aa)). PDF region stretches follow at residues 224–276 (WFDL…SELK) and 296–344 (WKDL…EKLP).

The protein localises to the plastid. It is found in the chloroplast. Functionally, binds single-stranded DNA. This is Protein OSB4, chloroplastic (OSB4) from Arabidopsis thaliana (Mouse-ear cress).